We begin with the raw amino-acid sequence, 134 residues long: Large-conductance mechanosensitive channel (134 aa).

Helical transmembrane passes span 16-36 (VIDL…VTAL) and 84-104 (INTL…IKVI).

This sequence belongs to the MscL family. As to quaternary structure, homopentamer.

The protein resides in the cell inner membrane. Its function is as follows. Channel that opens in response to stretch forces in the membrane lipid bilayer. May participate in the regulation of osmotic pressure changes within the cell. In Stenotrophomonas maltophilia (strain R551-3), this protein is Large-conductance mechanosensitive channel.